Reading from the N-terminus, the 272-residue chain is Type III pantothenate kinase (272 aa).

6–13 (DVRNTHTV) contacts ATP. 109-112 (GADR) provides a ligand contact to substrate. The active-site Proton acceptor is the aspartate 111. Aspartate 131 lines the K(+) pocket. ATP is bound at residue serine 134. Threonine 186 is a substrate binding site.

It belongs to the type III pantothenate kinase family. In terms of assembly, homodimer. Requires NH4(+) as cofactor. The cofactor is K(+).

The protein localises to the cytoplasm. The catalysed reaction is (R)-pantothenate + ATP = (R)-4'-phosphopantothenate + ADP + H(+). It functions in the pathway cofactor biosynthesis; coenzyme A biosynthesis; CoA from (R)-pantothenate: step 1/5. Functionally, catalyzes the phosphorylation of pantothenate (Pan), the first step in CoA biosynthesis. The sequence is that of Type III pantothenate kinase from Mycobacterium ulcerans (strain Agy99).